Here is a 224-residue protein sequence, read N- to C-terminus: Nodulin-C51 (224 aa).

An N-terminal signal peptide occupies residues 1–20 (MEKMRVIVITVFLFIGAAIA). The disordered stretch occupies residues 103–124 (PSEVFPRKNNPQGGRKSKLDDH).

The protein belongs to the nodulin 20 family.

Involved in the infection process during the plant-rhizobium interaction. The sequence is that of Nodulin-C51 from Glycine max (Soybean).